The primary structure comprises 225 residues: UPF0758 protein Sez_1052 (225 aa).

Residues 102-224 enclose the MPN domain; it reads PVLSSAQVAE…YYSFREKSDL (123 aa). Zn(2+) contacts are provided by H173, H175, and D186. A JAMM motif motif is present at residues 173–186; the sequence is HNHPSGLTKPSAND.

This sequence belongs to the UPF0758 family.

This Streptococcus equi subsp. zooepidemicus (strain MGCS10565) protein is UPF0758 protein Sez_1052.